The following is a 543-amino-acid chain: Sodium-dependent lysophosphatidylcholine symporter 1 (543 aa).

Low complexity predominate over residues 1-14; that stretch reads MAKGEGAESGSAAG. Residues 1 to 34 are disordered; that stretch reads MAKGEGAESGSAAGLLPTSILQSTERPAQVKKEP. The Cytoplasmic segment spans residues 1–40; sequence MAKGEGAESGSAAGLLPTSILQSTERPAQVKKEPKKKKQQ. A helical transmembrane segment spans residues 41-70; the sequence is LSVCNKLCYALGGAPYQVTGCALGFFLQIY. Residues 71–94 lie on the Extracellular side of the membrane; it reads LLDVAQKDEEVVFCFSSFQVGPFS. The helical transmembrane segment at 95–115 threads the bilayer; that stretch reads ASIILFVGRAWDAITDPLVGL. Topologically, residues 116–127 are cytoplasmic; it reads CISKSPWTCLGR. A helical membrane pass occupies residues 128 to 147; sequence LMPWIIFSTPLAVIAYFLIW. Over 148–157 the chain is Extracellular; it reads FVPDFPHGQT. Residues 158 to 182 traverse the membrane as a helical segment; sequence YWYLLFYCLFETMVTCFHVPYSALT. The Cytoplasmic segment spans residues 183-189; sequence MFISTEQ. The chain crosses the membrane as a helical span at residues 190–221; the sequence is TERDSATAYRMTVEVLGTVLGTAIQGQIVGQA. The Extracellular portion of the chain corresponds to 222 to 241; that stretch reads DTPCFQDLNSSTVASQSANH. The cysteines at positions 225 and 473 are disulfide-linked. N230 and N240 each carry an N-linked (GlcNAc...) asparagine glycan. A helical transmembrane segment spans residues 242 to 275; it reads THGTTSHRETQKAYLLAAGVIVCIYIICAVILIL. Topologically, residues 276 to 306 are cytoplasmic; that stretch reads GVREQREPYEAQQSEPIAYFRGLRLVMSHGP. The chain crosses the membrane as a helical span at residues 307-333; it reads YIKLITGFLFTSLAFMLVEGNFVLFCT. The Extracellular portion of the chain corresponds to 334–344; it reads YTLGFRNEFQN. A helical transmembrane segment spans residues 345 to 363; that stretch reads LLLAIMLSATLTIPIWQWF. At 364 to 367 the chain is on the cytoplasmic side; the sequence is LTRF. The helical transmembrane segment at 368-389 threads the bilayer; that stretch reads GKKTAVYVGISSAVPFLILVAL. The Extracellular portion of the chain corresponds to 390-392; it reads MES. Residues 393–429 traverse the membrane as a helical segment; it reads NLIITYAVAVAAGISVAAAFLLPWSMLPDVIDDFHLK. Topologically, residues 430–439 are cytoplasmic; sequence QPHFHGTEPI. The chain crosses the membrane as a helical span at residues 440 to 466; that stretch reads FFSFYVFFTKFASGVSLGISTLSLDFA. Residues 467–478 lie on the Extracellular side of the membrane; the sequence is GYQTRGCSQPER. The chain crosses the membrane as a helical span at residues 479-502; that stretch reads VKFTLNMLVTMAPIVLILLGLLLF. Residues 503-543 lie on the Cytoplasmic side of the membrane; it reads KMYPIDEERRRQNKKALQALRDEASSSGCSETDSTELASIL.

The protein belongs to the major facilitator superfamily. Interacts with ERVFRD-1/syncytin-2. In placenta, associated with trophoblast cells.

It is found in the cell membrane. The protein localises to the endoplasmic reticulum membrane. The catalysed reaction is a 1-acyl-sn-glycero-3-phosphocholine(in) + Na(+)(in) = a 1-acyl-sn-glycero-3-phosphocholine(out) + Na(+)(out). It catalyses the reaction 1-(4Z,7Z,10Z,13Z,16Z,19Z-docosahexaenoyl)-sn-glycero-3-phosphocholine(in) + Na(+)(in) = 1-(4Z,7Z,10Z,13Z,16Z,19Z-docosahexaenoyl)-sn-glycero-3-phosphocholine(out) + Na(+)(out). The enzyme catalyses 1-(9Z-octadecenoyl)-sn-glycero-3-phosphocholine(in) + Na(+)(in) = 1-(9Z-octadecenoyl)-sn-glycero-3-phosphocholine(out) + Na(+)(out). It carries out the reaction 1-hexadecanoyl-sn-glycero-3-phosphocholine(in) + Na(+)(in) = 1-hexadecanoyl-sn-glycero-3-phosphocholine(out) + Na(+)(out). The catalysed reaction is a 1-acyl-sn-glycero-3-phosphoethanolamine(in) + Na(+)(in) = a 1-acyl-sn-glycero-3-phosphoethanolamine(out) + Na(+)(out). Functionally, sodium-dependent lysophosphatidylcholine (LPC) symporter, which plays an essential role for blood-brain barrier formation and function. Specifically expressed in endothelium of the blood-brain barrier of micro-vessels and transports LPC into the brain. Transport of LPC is essential because it constitutes the major mechanism by which docosahexaenoic acid (DHA), an omega-3 fatty acid that is essential for normal brain growth and cognitive function, enters the brain. Transports LPC carrying long-chain fatty acids such LPC oleate and LPC palmitate with a minimum acyl chain length of 14 carbons. Does not transport docosahexaenoic acid in unesterified fatty acid. Specifically required for blood-brain barrier formation and function, probably by mediating lipid transport. Not required for central nervous system vascular morphogenesis. Acts as a transporter for tunicamycin, an inhibitor of asparagine-linked glycosylation. In placenta, acts as a receptor for ERVFRD-1/syncytin-2 and is required for trophoblast fusion. This chain is Sodium-dependent lysophosphatidylcholine symporter 1, found in Homo sapiens (Human).